The sequence spans 92 residues: MAKRTKKVGITGKYGVRYGSSLRRQVKKLEIQQHARYDCSFCGKKTVKRGAAGIWTCSCCKKTVAGGAYTVSTAAAATVRSTIRRLREMVEA.

The segment at 39–60 adopts a C4-type zinc-finger fold; it reads CSFCGKKTVKRGAAGIWTCSCC. Phosphoserine is present on Ser-40.

This sequence belongs to the eukaryotic ribosomal protein eL43 family. Component of the large ribosomal subunit (LSU). Mature yeast ribosomes consist of a small (40S) and a large (60S) subunit. The 40S small subunit contains 1 molecule of ribosomal RNA (18S rRNA) and 33 different proteins (encoded by 57 genes). The large 60S subunit contains 3 rRNA molecules (25S, 5.8S and 5S rRNA) and 46 different proteins (encoded by 81 genes).

It is found in the cytoplasm. Its function is as follows. Component of the ribosome, a large ribonucleoprotein complex responsible for the synthesis of proteins in the cell. The small ribosomal subunit (SSU) binds messenger RNAs (mRNAs) and translates the encoded message by selecting cognate aminoacyl-transfer RNA (tRNA) molecules. The large subunit (LSU) contains the ribosomal catalytic site termed the peptidyl transferase center (PTC), which catalyzes the formation of peptide bonds, thereby polymerizing the amino acids delivered by tRNAs into a polypeptide chain. The nascent polypeptides leave the ribosome through a tunnel in the LSU and interact with protein factors that function in enzymatic processing, targeting, and the membrane insertion of nascent chains at the exit of the ribosomal tunnel. The protein is Large ribosomal subunit protein eL43A of Saccharomyces cerevisiae (strain ATCC 204508 / S288c) (Baker's yeast).